A 201-amino-acid polypeptide reads, in one-letter code: MEDVLDLGEAPSRRTGVKMGRRARAAQETQQETADVSRNQTGREGPPKPLRQGGWADDSSGPSKSTRRMTDDVEDSRLKQQSLDESDEGEDIPVIPDLEDVQEEDLALQVASPPSVQVNRVMTYRDLDNDLMRHAAFQSLDGDVDLKLLTKVLSPEPEVREENVRWDWDLLFTEVSSELITEWDVGKMEKEDMLKPSPLVS.

The disordered stretch occupies residues 1–104; sequence MEDVLDLGEA…IPDLEDVQEE (104 aa). Positions 15-24 are enriched in basic residues; sequence TGVKMGRRAR. Positions 68-78 are enriched in basic and acidic residues; the sequence is RMTDDVEDSRL. Over residues 84 to 104 the composition is skewed to acidic residues; the sequence is DESDEGEDIPVIPDLEDVQEE.

The protein belongs to the IFT43 family. Component of the IFT complex A (IFT-A) complex.

It is found in the cytoplasm. The protein localises to the cytoskeleton. The protein resides in the cell projection. Its subcellular location is the cilium. Its function is as follows. As a component of IFT complex A (IFT-A), a complex required for retrograde ciliary transport and entry into cilia of G protein-coupled receptors (GPCRs), it is involved in ciliogenesis. Involved in retrograde ciliary transport along microtubules from the ciliary tip to the base. The polypeptide is Intraflagellar transport protein 43 homolog (ift43) (Xenopus laevis (African clawed frog)).